The sequence spans 900 residues: Translation initiation factor IF-2 (900 aa).

3 stretches are compositionally biased toward basic and acidic residues: residues 119–158 (AAKA…EKQE), 165–191 (ADEK…KADA), and 198–229 (EEAR…DHHV). A disordered region spans residues 119–306 (AAKAEAEAKA…NARSVAPESM (188 aa)). A compositionally biased stretch (low complexity) spans 257 to 272 (SANAGNNANSNSNAGS). The tr-type G domain occupies 400–569 (PRAPVVTIMG…LLESEVLELK (170 aa)). Residues 409-416 (GHVDHGKT) are G1. 409–416 (GHVDHGKT) contributes to the GTP binding site. Residues 434–438 (GITQH) form a G2 region. Residues 455–458 (DTPG) form a G3 region. GTP-binding positions include 455–459 (DTPGH) and 509–512 (NKID). The G4 stretch occupies residues 509–512 (NKID). Residues 545–547 (SAK) form a G5 region.

This sequence belongs to the TRAFAC class translation factor GTPase superfamily. Classic translation factor GTPase family. IF-2 subfamily.

Its subcellular location is the cytoplasm. Functionally, one of the essential components for the initiation of protein synthesis. Protects formylmethionyl-tRNA from spontaneous hydrolysis and promotes its binding to the 30S ribosomal subunits. Also involved in the hydrolysis of GTP during the formation of the 70S ribosomal complex. This Shewanella piezotolerans (strain WP3 / JCM 13877) protein is Translation initiation factor IF-2.